Reading from the N-terminus, the 1199-residue chain is Putative mitoferrin (1199 aa).

Residues 32 to 52 (VPLWQHIFCGSIAGLMEHVFM) form a helical membrane-spanning segment. N-linked (GlcNAc...) asparagine glycans are attached at residues asparagine 92, asparagine 171, asparagine 208, asparagine 268, asparagine 326, asparagine 353, asparagine 443, asparagine 499, asparagine 539, asparagine 649, asparagine 708, asparagine 715, and asparagine 723. Residues 730–750 (GVNVVVLGCIPAHALYFSTFE) form a helical membrane-spanning segment. Residues asparagine 763 and asparagine 772 are each glycosylated (N-linked (GlcNAc...) asparagine). The stretch at 792-873 (LNYFSIAVSG…ICTNEKMKKI (82 aa)) is one Solcar 1 repeat. A run of 2 helical transmembrane segments spans residues 795 to 815 (FSIA…ITPI) and 845 to 865 (LYLS…IMIC). Asparagine 914, asparagine 922, asparagine 965, asparagine 1013, asparagine 1022, asparagine 1041, and asparagine 1056 each carry an N-linked (GlcNAc...) asparagine glycan. A Solcar 2 repeat occupies 1109 to 1191 (SYFVCAGIGG…WGTYETMKRF (83 aa)). Residues 1111 to 1131 (FVCAGIGGGIAAVLTNPLDVI) traverse the membrane as a helical segment.

The protein belongs to the mitochondrial carrier (TC 2.A.29) family.

Its subcellular location is the mitochondrion membrane. Putative iron transporter. The sequence is that of Putative mitoferrin from Plasmodium falciparum (isolate 3D7).